A 312-amino-acid polypeptide reads, in one-letter code: Malate dehydrogenase (312 aa).

Residues 12–17 (GAGFTG) and aspartate 36 contribute to the NAD(+) site. Positions 87 and 93 each coordinate substrate. Residues asparagine 100 and 123–125 (LTN) each bind NAD(+). Asparagine 125 contacts substrate. Serine 149 carries the post-translational modification Phosphoserine. Position 156 (arginine 156) interacts with substrate. Histidine 180 (proton acceptor) is an active-site residue.

This sequence belongs to the LDH/MDH superfamily. MDH type 3 family.

The enzyme catalyses (S)-malate + NAD(+) = oxaloacetate + NADH + H(+). Its function is as follows. Catalyzes the reversible oxidation of malate to oxaloacetate. This is Malate dehydrogenase from Bacillus mycoides (strain KBAB4) (Bacillus weihenstephanensis).